The following is a 235-amino-acid chain: Transmembrane protein 215 (235 aa).

A run of 2 helical transmembrane segments spans residues 12–32 (LVVALVSVFLVFGFMFTVSGM) and 40–60 (IPLLAIGPAICLPGIAAIALA). A disordered region spans residues 99–158 (SDLESGKGSSDELAKKAGLRGKPSLQGQGELPMASSITTPTPMEEGECQSPGQSGRREET).

The protein resides in the membrane. In Bos taurus (Bovine), this protein is Transmembrane protein 215 (TMEM215).